The following is a 425-amino-acid chain: E3 ubiquitin-protein ligase CBLL2 (425 aa).

The segment at C57–R97 adopts an RING-type zinc-finger fold. The segment at C96 to R154 is HYB domain. Residues F112 to H138 form a C2H2-type zinc finger. Disordered regions lie at residues D241 to P297 and T382 to Y425. Pro residues predominate over residues P398–S408. Over residues G412–Y425 the composition is skewed to basic residues.

Homodimer. In terms of tissue distribution, exclusively expressed in testis and sperm, including spermatocytes, round and elongated spermatids, and Leydig cells.

It is found in the cytoplasm. The enzyme catalyses S-ubiquitinyl-[E2 ubiquitin-conjugating enzyme]-L-cysteine + [acceptor protein]-L-lysine = [E2 ubiquitin-conjugating enzyme]-L-cysteine + N(6)-ubiquitinyl-[acceptor protein]-L-lysine.. The protein operates within protein modification; protein ubiquitination. In terms of biological role, E3 ubiquitin ligase catalyzing the covalent attachment of ubiquitin moieties onto substrate proteins. May operate on tyrosine-phosphorylated SRC substrates. The polypeptide is E3 ubiquitin-protein ligase CBLL2 (Homo sapiens (Human)).